The following is a 136-amino-acid chain: Late embryogenesis abundant protein D-7 (136 aa).

Disordered regions lie at residues 1-108 (MASH…AQGA) and 117-136 (GMAD…TRKD). Positions 11–58 (GRAEGRAHEKGEQMKESMKEKAEAAKQKTMETAEAAKQKTMETAEAAK) are enriched in basic and acidic residues. 5 LEA 11-mer repeat repeats span residues 31 to 41 (KAEAAKQKTME), 42 to 52 (TAEAAKQKTME), 53 to 63 (TAEAAKQKTRG), 64 to 74 (AAETTNDKTKQ), and 75 to 85 (TAGAARGKAEE).

The protein belongs to the LEA type 4 family.

LEA proteins are late embryonic proteins abundant in higher plant seed embryos. There are two subsets of LEA proteins (5a and 5b), the first ones are expressed when the cotyledon weight reach 80 mg and the second set are expressed above 100 mg. The function of those proteins is not known. The chain is Late embryogenesis abundant protein D-7 from Gossypium hirsutum (Upland cotton).